A 114-amino-acid polypeptide reads, in one-letter code: NADH dehydrogenase [ubiquinone] 1 subunit C2, isoform 2 (114 aa).

The helical transmembrane segment at 56-75 (GLHRQLLYITAFFFAGYYLV) threads the bilayer.

It belongs to the complex I NDUFC2 subunit family. As to quaternary structure, complex I is composed of 45 different subunits.

Its subcellular location is the mitochondrion inner membrane. Its function is as follows. Accessory subunit of the mitochondrial membrane respiratory chain NADH dehydrogenase (Complex I), that is believed not to be involved in catalysis. Complex I functions in the transfer of electrons from NADH to the respiratory chain. The immediate electron acceptor for the enzyme is believed to be ubiquinone. This Homo sapiens (Human) protein is NADH dehydrogenase [ubiquinone] 1 subunit C2, isoform 2 (NDUFC2-KCTD14).